A 633-amino-acid chain; its full sequence is DNA topoisomerase 1 (633 aa).

Positions 6–115 constitute a Toprim domain; that stretch reads KKYIVVESPA…KNRIVFSEIT (110 aa). Glu12 and Asp84 together coordinate Mg(2+). Residues 130–543 form the Topo IA-type catalytic domain; that stretch reads DMKKVRAQLA…EFYESFSSVF (414 aa). The interval 164–169 is interaction with DNA; sequence SAGRVQ. Tyr288 functions as the O-(5'-phospho-DNA)-tyrosine intermediate in the catalytic mechanism. Cystine bridges form between Cys559/Cys578 and Cys561/Cys580. A C4-type zinc finger spans residues 559 to 580; it reads CSCGKEMRLSFGKYGFYLKCEC. Residues 601 to 633 form a disordered region; sequence LGRKDSESGSPDGRSVEGKGNLSEKRRKGKKGS.

This sequence belongs to the type IA topoisomerase family. As to quaternary structure, monomer. Mg(2+) serves as cofactor.

The catalysed reaction is ATP-independent breakage of single-stranded DNA, followed by passage and rejoining.. Functionally, releases the supercoiling and torsional tension of DNA, which is introduced during the DNA replication and transcription, by transiently cleaving and rejoining one strand of the DNA duplex. Introduces a single-strand break via transesterification at a target site in duplex DNA. The scissile phosphodiester is attacked by the catalytic tyrosine of the enzyme, resulting in the formation of a DNA-(5'-phosphotyrosyl)-enzyme intermediate and the expulsion of a 3'-OH DNA strand. The free DNA strand then undergoes passage around the unbroken strand, thus removing DNA supercoils. Finally, in the religation step, the DNA 3'-OH attacks the covalent intermediate to expel the active-site tyrosine and restore the DNA phosphodiester backbone. The polypeptide is DNA topoisomerase 1 (Thermotoga maritima (strain ATCC 43589 / DSM 3109 / JCM 10099 / NBRC 100826 / MSB8)).